Reading from the N-terminus, the 239-residue chain is 1-(5-phosphoribosyl)-5-[(5-phosphoribosylamino)methylideneamino] imidazole-4-carboxamide isomerase (239 aa).

The active-site Proton acceptor is Asp-7. The Proton donor role is filled by Asp-129.

This sequence belongs to the HisA/HisF family.

The protein localises to the cytoplasm. It catalyses the reaction 1-(5-phospho-beta-D-ribosyl)-5-[(5-phospho-beta-D-ribosylamino)methylideneamino]imidazole-4-carboxamide = 5-[(5-phospho-1-deoxy-D-ribulos-1-ylimino)methylamino]-1-(5-phospho-beta-D-ribosyl)imidazole-4-carboxamide. Its pathway is amino-acid biosynthesis; L-histidine biosynthesis; L-histidine from 5-phospho-alpha-D-ribose 1-diphosphate: step 4/9. This chain is 1-(5-phosphoribosyl)-5-[(5-phosphoribosylamino)methylideneamino] imidazole-4-carboxamide isomerase, found in Lactiplantibacillus plantarum (strain ATCC BAA-793 / NCIMB 8826 / WCFS1) (Lactobacillus plantarum).